Consider the following 344-residue polypeptide: Serpentine receptor class alpha-27 (344 aa).

7 helical membrane-spanning segments follow: residues 28–48 (SIWMKINFVFVFILIFLTFYL), 67–87 (QILLMITLLNANLNQLIFLEI), 128–148 (GLLSALTFDRFFALYASTVYV), 157–177 (MLITVSIIVTVIVHIRTYGGV), 203–223 (AIFWIIMANCVLTIAVLLLNI), 252–272 (ICSVTSTQFVFLSFSTAALAI), and 287–307 (INIQYINGGVYGNLSIPVLIY).

This sequence belongs to the nematode receptor-like protein sra family.

It localises to the membrane. The polypeptide is Serpentine receptor class alpha-27 (sra-27) (Caenorhabditis elegans).